The following is a 756-amino-acid chain: Polyribonucleotide nucleotidyltransferase (756 aa).

Residues D547 and D553 each contribute to the Mg(2+) site. The region spanning P613–V672 is the KH domain. The 70-residue stretch at G684 to V753 folds into the S1 motif domain.

The protein belongs to the polyribonucleotide nucleotidyltransferase family. Requires Mg(2+) as cofactor.

It localises to the cytoplasm. The catalysed reaction is RNA(n+1) + phosphate = RNA(n) + a ribonucleoside 5'-diphosphate. Involved in mRNA degradation. Catalyzes the phosphorolysis of single-stranded polyribonucleotides processively in the 3'- to 5'-direction. This is Polyribonucleotide nucleotidyltransferase from Corynebacterium aurimucosum (strain ATCC 700975 / DSM 44827 / CIP 107346 / CN-1) (Corynebacterium nigricans).